Reading from the N-terminus, the 184-residue chain is Photosystem I assembly protein Ycf4 (184 aa).

2 consecutive transmembrane segments (helical) span residues 22 to 42 (FCWA…GTSS) and 57 to 77 (ILFF…LFIS).

The protein belongs to the Ycf4 family.

It localises to the plastid. The protein resides in the chloroplast thylakoid membrane. Seems to be required for the assembly of the photosystem I complex. The protein is Photosystem I assembly protein Ycf4 of Phalaenopsis aphrodite subsp. formosana (Moth orchid).